Reading from the N-terminus, the 86-residue chain is Small ribosomal subunit protein uS15c (86 aa).

This sequence belongs to the universal ribosomal protein uS15 family. Part of the 30S ribosomal subunit.

It localises to the plastid. This chain is Small ribosomal subunit protein uS15c (rps15), found in Cuscuta obtusiflora (Peruvian dodder).